We begin with the raw amino-acid sequence, 282 residues long: 2-dehydro-3-deoxyphosphooctonate aldolase (282 aa).

This sequence belongs to the KdsA family.

It is found in the cytoplasm. It catalyses the reaction D-arabinose 5-phosphate + phosphoenolpyruvate + H2O = 3-deoxy-alpha-D-manno-2-octulosonate-8-phosphate + phosphate. It functions in the pathway carbohydrate biosynthesis; 3-deoxy-D-manno-octulosonate biosynthesis; 3-deoxy-D-manno-octulosonate from D-ribulose 5-phosphate: step 2/3. Its pathway is bacterial outer membrane biogenesis; lipopolysaccharide biosynthesis. This Shewanella oneidensis (strain ATCC 700550 / JCM 31522 / CIP 106686 / LMG 19005 / NCIMB 14063 / MR-1) protein is 2-dehydro-3-deoxyphosphooctonate aldolase.